The chain runs to 356 residues: Dihydroorotate dehydrogenase (quinone) (356 aa).

Residues 66–70 and Thr90 each bind FMN; that span reads AGFDK. A substrate-binding site is contributed by Lys70. 115-119 serves as a coordination point for substrate; the sequence is NRMGF. FMN is bound by residues Asn143 and Asn176. Substrate is bound at residue Asn176. Catalysis depends on Ser179, which acts as the Nucleophile. Residue Asn181 participates in substrate binding. FMN is bound by residues Lys212 and Thr240. Position 241 to 242 (241 to 242) interacts with substrate; sequence NT. FMN is bound by residues Gly266, Gly295, and 316–317; that span reads YT.

It belongs to the dihydroorotate dehydrogenase family. Type 2 subfamily. Monomer. The cofactor is FMN.

It localises to the cell membrane. The catalysed reaction is (S)-dihydroorotate + a quinone = orotate + a quinol. It participates in pyrimidine metabolism; UMP biosynthesis via de novo pathway; orotate from (S)-dihydroorotate (quinone route): step 1/1. Functionally, catalyzes the conversion of dihydroorotate to orotate with quinone as electron acceptor. This Rhodococcus erythropolis (strain PR4 / NBRC 100887) protein is Dihydroorotate dehydrogenase (quinone).